The chain runs to 209 residues: Uracil phosphoribosyltransferase (209 aa).

5-phospho-alpha-D-ribose 1-diphosphate-binding positions include Arg-79, Arg-104, and 131–139; that span reads DPMLATGGS. Uracil contacts are provided by residues Ile-194 and 199–201; that span reads GDA. Asp-200 provides a ligand contact to 5-phospho-alpha-D-ribose 1-diphosphate.

The protein belongs to the UPRTase family. Mg(2+) is required as a cofactor.

It carries out the reaction UMP + diphosphate = 5-phospho-alpha-D-ribose 1-diphosphate + uracil. Its pathway is pyrimidine metabolism; UMP biosynthesis via salvage pathway; UMP from uracil: step 1/1. Its activity is regulated as follows. Allosterically activated by GTP. Catalyzes the conversion of uracil and 5-phospho-alpha-D-ribose 1-diphosphate (PRPP) to UMP and diphosphate. The sequence is that of Uracil phosphoribosyltransferase from Listeria innocua serovar 6a (strain ATCC BAA-680 / CLIP 11262).